The following is a 205-amino-acid chain: Outer-membrane lipoprotein LolB (205 aa).

An N-terminal signal peptide occupies residues 1–17 (MFLRHCITFTLIALLAG). Cys18 is lipidated: N-palmitoyl cysteine. Cys18 is lipidated: S-diacylglycerol cysteine.

The protein belongs to the LolB family. As to quaternary structure, monomer.

The protein resides in the cell outer membrane. Plays a critical role in the incorporation of lipoproteins in the outer membrane after they are released by the LolA protein. The protein is Outer-membrane lipoprotein LolB of Pseudomonas putida (strain ATCC 47054 / DSM 6125 / CFBP 8728 / NCIMB 11950 / KT2440).